The chain runs to 243 residues: Ribosomal RNA small subunit methyltransferase G (243 aa).

Residues Gly-97, Leu-102, 148-149 (VE), and Arg-161 each bind S-adenosyl-L-methionine.

Belongs to the methyltransferase superfamily. RNA methyltransferase RsmG family.

Its subcellular location is the cytoplasm. It carries out the reaction guanosine(527) in 16S rRNA + S-adenosyl-L-methionine = N(7)-methylguanosine(527) in 16S rRNA + S-adenosyl-L-homocysteine. Functionally, specifically methylates the N7 position of guanine in position 527 of 16S rRNA. This is Ribosomal RNA small subunit methyltransferase G from Paracidovorax citrulli (strain AAC00-1) (Acidovorax citrulli).